Consider the following 618-residue polypeptide: DNA mismatch repair protein MutL (618 aa).

Positions 366–378 (AEPTAAREPATPR) are enriched in low complexity. The segment at 366–403 (AEPTAAREPATPRYSDGASGGNGGRQSAGGWPHAQPGY) is disordered. Residues 383-392 (ASGGNGGRQS) show a composition bias toward gly residues.

This sequence belongs to the DNA mismatch repair MutL/HexB family.

This protein is involved in the repair of mismatches in DNA. It is required for dam-dependent methyl-directed DNA mismatch repair. May act as a 'molecular matchmaker', a protein that promotes the formation of a stable complex between two or more DNA-binding proteins in an ATP-dependent manner without itself being part of a final effector complex. The polypeptide is DNA mismatch repair protein MutL (Salmonella typhi).